A 77-amino-acid chain; its full sequence is Conotoxin G11.1 (77 aa).

The signal sequence occupies residues 1–20; sequence MKLFLAIVLILMLQFLSTGA. A propeptide spanning residues 21–45 is cleaved from the precursor; it reads ETSDNHASRSTTALRDWLLGPKAKR. 4 disulfide bridges follow: C46–C60, C53–C65, C59–C69, and C64–C76.

Belongs to the conotoxin I3 superfamily. In terms of tissue distribution, expressed by the venom duct.

The protein resides in the secreted. In terms of biological role, may embed in the membrane and bind to the voltage sensor domain of a ion channel. Does not induce paralysis when injected in fish, leading to the hypothesis that it may be part of the sedative nirvana cabal. The protein is Conotoxin G11.1 of Conus geographus (Geography cone).